Consider the following 413-residue polypeptide: uncharacterized protein (413 aa).

A helical transmembrane segment spans residues L14 to L34. Residues N46, N55, N103, N171, N179, N184, N220, N252, N260, N273, N362, N366, N374, N378, N393, and N408 are each glycosylated (N-linked (GlcNAc...) asparagine; by host). A compositionally biased stretch (low complexity) spans T250–E263. The interval T250–P277 is disordered. Residues I264–P277 show a composition bias toward polar residues.

It localises to the membrane. This is an uncharacterized protein from Acanthamoeba polyphaga (Amoeba).